The chain runs to 59 residues: Cecropin-C (59 aa).

The N-terminal stretch at 1 to 23 (MNFKLIFLVALVLMAAFLGQTEG) is a signal peptide. Val58 is modified (valine amide).

The protein belongs to the cecropin family.

Its subcellular location is the secreted. Cecropins have lytic and antibacterial activity against several Gram-positive and Gram-negative bacteria. The protein is Cecropin-C (CecC) of Anopheles gambiae (African malaria mosquito).